An 81-amino-acid chain; its full sequence is Antimicrobial peptide D2 (81 aa).

The N-terminal stretch at M1–E31 is a signal peptide. 4 disulfide bridges follow: C34/C81, C45/C66, C51/C75, and C55/C77.

Antimicrobial peptide probably active against fungi like B.sorokiniana, F.oxysporum, F.graminearum, F.avenaceum, B.cinerea, P.beta, P.infestans and P.debaryanum. In Stellaria media (Common chickweed), this protein is Antimicrobial peptide D2.